The primary structure comprises 156 residues: Acanthoscurrin-1 (156 aa).

The N-terminal stretch at 1–23 is a signal peptide; the sequence is MAFRMKLVVCIVLLSTLAVMSSA. K155 is modified (lysine amide).

As to expression, expressed in hemocytes and secreted into the plasma following bacterial immune challenge.

It localises to the secreted. Its function is as follows. Antimicrobial protein. Strong activity against the Gram-negative bacterium E.coli SBS363 and yeast C.albicans. No detectable activity against the Gram-positive bacterium M.luteus. In Acanthoscurria gomesiana (Tarantula spider), this protein is Acanthoscurrin-1.